The sequence spans 323 residues: tRNA U34 carboxymethyltransferase (323 aa).

Residues Lys91, Trp105, Lys110, Gly130, 152 to 154 (DPT), 181 to 182 (IE), Met196, Tyr200, and Arg315 each bind carboxy-S-adenosyl-L-methionine.

The protein belongs to the class I-like SAM-binding methyltransferase superfamily. CmoB family. In terms of assembly, homotetramer.

The enzyme catalyses carboxy-S-adenosyl-L-methionine + 5-hydroxyuridine(34) in tRNA = 5-carboxymethoxyuridine(34) in tRNA + S-adenosyl-L-homocysteine + H(+). In terms of biological role, catalyzes carboxymethyl transfer from carboxy-S-adenosyl-L-methionine (Cx-SAM) to 5-hydroxyuridine (ho5U) to form 5-carboxymethoxyuridine (cmo5U) at position 34 in tRNAs. The sequence is that of tRNA U34 carboxymethyltransferase from Escherichia coli (strain K12 / MC4100 / BW2952).